Reading from the N-terminus, the 493-residue chain is Non-cyanogenic beta-glucosidase (493 aa).

The signal sequence occupies residues 1 to 18; it reads MDFIVAIFALFVISSFTI. Asn-34 is a glycosylation site (N-linked (GlcNAc...) asparagine). Residues Gln-54, His-158, and 203–204 contribute to the a beta-D-glucoside site; that span reads NE. Catalysis depends on Glu-204, which acts as the Proton donor. An N-linked (GlcNAc...) asparagine glycan is attached at Asn-335. Tyr-346 provides a ligand contact to a beta-D-glucoside. 2 N-linked (GlcNAc...) asparagine glycosylation sites follow: Asn-371 and Asn-412. Residues Glu-422, Trp-471, 478-479, and Phe-487 each bind a beta-D-glucoside; that span reads EW. The active-site Nucleophile is the Glu-422.

It belongs to the glycosyl hydrolase 1 family. In terms of tissue distribution, leaves.

It carries out the reaction Hydrolysis of terminal, non-reducing beta-D-glucosyl residues with release of beta-D-glucose.. This Trifolium repens (Creeping white clover) protein is Non-cyanogenic beta-glucosidase.